Consider the following 155-residue polypeptide: Probable cyclic pyranopterin monophosphate synthase (155 aa).

Residues 74 to 76 (MCH) and 110 to 111 (ME) contribute to the substrate site. The active site involves Asp125.

Belongs to the MoaC family. In terms of assembly, homohexamer; trimer of dimers.

It catalyses the reaction (8S)-3',8-cyclo-7,8-dihydroguanosine 5'-triphosphate = cyclic pyranopterin phosphate + diphosphate. It functions in the pathway cofactor biosynthesis; molybdopterin biosynthesis. Its function is as follows. Catalyzes the conversion of (8S)-3',8-cyclo-7,8-dihydroguanosine 5'-triphosphate to cyclic pyranopterin monophosphate (cPMP). The protein is Probable cyclic pyranopterin monophosphate synthase of Methanoregula boonei (strain DSM 21154 / JCM 14090 / 6A8).